The following is a 1071-amino-acid chain: Kinesin-like protein KIN-14J (1071 aa).

The Calponin-homology (CH) domain maps to 39-142 (KKGHQSLVEW…SLKALKASFS (104 aa)). The tract at residues 157–181 (WSLPEDHSDSRGDDRNFTDGFQSKE) is disordered. The segment covering 158–173 (SLPEDHSDSRGDDRNF) has biased composition (basic and acidic residues). Residues 299 to 389 (EKTRIEEKER…ELEKLCQSKS (91 aa)) adopt a coiled-coil conformation. The region spanning 472–800 (NIRVYCRIRP…LKFAERVSGV (329 aa)) is the Kinesin motor domain. ATP is bound at residue 556–563 (GQTGSGKT). A coiled-coil region spans residues 811-844 (GRDVRQLMEQVSNLKDVIAKKDEELQNFQKVKGN). Disordered stretches follow at residues 852–931 (GLSN…AAKG) and 995–1071 (ARMT…NRRR). Basic and acidic residues-rich tracts occupy residues 910–921 (SDERKHQKDYHQ) and 995–1017 (ARMT…KDRT). The span at 1034 to 1049 (TRPSRLSIATSSSSKA) shows a compositional bias: polar residues.

Belongs to the TRAFAC class myosin-kinesin ATPase superfamily. Kinesin family. KIN-14 subfamily.

The protein is Kinesin-like protein KIN-14J of Arabidopsis thaliana (Mouse-ear cress).